The following is a 239-amino-acid chain: MNTTSTETRKAMAAAAAVALVRPGMVIGLGFGSTAAYATRMIAERLHQGDLNDIVGVPCAEGTAQLARELGIPLTTLDEVAAVDLTIDGADEVDPQLSLIKGGGGALLREKMVAQASRRVAIIVDDSKLSPALGTRFALPLEVVDFGWRATARWLEAQGGTVQLRLRADGQPFRTDQGNLILDWKCGPLNDPAALAAQLSARAGIVEHGLFIGLATDLFVAGPDGVQHVTTSDCGTIAW.

Residues 31–34 (FGST), 88–91 (DGAD), and 101–104 (KGGG) contribute to the substrate site. Glu-110 serves as the catalytic Proton acceptor. Lys-128 provides a ligand contact to substrate.

It belongs to the ribose 5-phosphate isomerase family. In terms of assembly, homodimer.

The enzyme catalyses aldehydo-D-ribose 5-phosphate = D-ribulose 5-phosphate. Its pathway is carbohydrate degradation; pentose phosphate pathway; D-ribose 5-phosphate from D-ribulose 5-phosphate (non-oxidative stage): step 1/1. Its function is as follows. Catalyzes the reversible conversion of ribose-5-phosphate to ribulose 5-phosphate. The sequence is that of Ribose-5-phosphate isomerase A from Chloroflexus aurantiacus (strain ATCC 29366 / DSM 635 / J-10-fl).